The sequence spans 81 residues: Cytotoxin 4 (81 aa).

Residues 1-21 (MKTLLLTLVVVTIVCLDLGYT) form the signal peptide. 4 disulfides stabilise this stretch: cysteine 24-cysteine 42, cysteine 35-cysteine 59, cysteine 63-cysteine 74, and cysteine 75-cysteine 80.

The protein belongs to the three-finger toxin family. Short-chain subfamily. Type IA cytotoxin sub-subfamily. Monomer in solution; Homodimer and oligomer in the presence of negatively charged lipids forming a pore with a size ranging between 20 and 30 Angstroms. In terms of tissue distribution, expressed by the venom gland.

It is found in the secreted. It localises to the target cell membrane. In terms of biological role, basic protein that bind to cell membrane and depolarizes cardiomyocytes. This cytotoxin also shows lytic activities, but 2-fold more important than that of CTX-A2. It binds to the integrin alpha-V/beta-3 with a moderate affinity. Inhibits protein kinase C. It may interact with sulfatides in the cell membrane, which induces pore formation and cell internalization and is responsible for cytotoxicity in cardiomyocytes. It may also target the mitochondrial membrane and induces mitochondrial swelling and fragmentation. The protein is Cytotoxin 4 of Naja atra (Chinese cobra).